We begin with the raw amino-acid sequence, 163 residues long: Putative ribose 5-phosphate isomerase (163 aa).

16 to 17 (DD) is a binding site for D-ribulose 5-phosphate. The active-site Proton acceptor is C76. D-ribulose 5-phosphate is bound by residues 77–81 (GTGLG), N110, R120, and K148.

It belongs to the LacAB/RpiB family. Homodimer or homotetramer.

The chain is Putative ribose 5-phosphate isomerase from Coccidioides immitis (strain RS) (Valley fever fungus).